The primary structure comprises 179 residues: Peptide deformylase (179 aa).

Fe cation is bound by residues cysteine 102 and histidine 144. Residue glutamate 145 is part of the active site. Histidine 148 serves as a coordination point for Fe cation.

Belongs to the polypeptide deformylase family. The cofactor is Fe(2+).

The catalysed reaction is N-terminal N-formyl-L-methionyl-[peptide] + H2O = N-terminal L-methionyl-[peptide] + formate. Its function is as follows. Removes the formyl group from the N-terminal Met of newly synthesized proteins. Requires at least a dipeptide for an efficient rate of reaction. N-terminal L-methionine is a prerequisite for activity but the enzyme has broad specificity at other positions. This chain is Peptide deformylase, found in Wolbachia pipientis subsp. Culex pipiens (strain wPip).